We begin with the raw amino-acid sequence, 236 residues long: tRNA (guanine-N(1)-)-methyltransferase (236 aa).

Residues Gly114 and 134 to 139 each bind S-adenosyl-L-methionine; that span reads IGDYIL.

Belongs to the RNA methyltransferase TrmD family. Homodimer.

The protein resides in the cytoplasm. The catalysed reaction is guanosine(37) in tRNA + S-adenosyl-L-methionine = N(1)-methylguanosine(37) in tRNA + S-adenosyl-L-homocysteine + H(+). Its function is as follows. Specifically methylates guanosine-37 in various tRNAs. The chain is tRNA (guanine-N(1)-)-methyltransferase from Wolbachia pipientis wMel.